A 244-amino-acid chain; its full sequence is 2,5-diamino-6-ribosylamino-4(3H)-pyrimidinone 5'-phosphate reductase (244 aa).

NADP(+) is bound by residues T79, D83, V159, and 182 to 186; that span reads GANVI.

Belongs to the HTP reductase family. Homodimer.

It carries out the reaction 2,5-diamino-6-(1-D-ribitylamino)pyrimidin-4(3H)-one 5'-phosphate + NADP(+) = 2,5-diamino-6-(1-D-ribosylamino)pyrimidin-4(3H)-one 5'-phosphate + NADPH + H(+). It catalyses the reaction 2,5-diamino-6-(1-D-ribitylamino)pyrimidin-4(3H)-one 5'-phosphate + NAD(+) = 2,5-diamino-6-(1-D-ribosylamino)pyrimidin-4(3H)-one 5'-phosphate + NADH + H(+). Its pathway is cofactor biosynthesis; riboflavin biosynthesis. Its function is as follows. Catalyzes an early step in riboflavin biosynthesis, the NADPH-dependent reduction of the ribose side chain of 2,5-diamino-6-ribosylamino-4(3H)-pyrimidinone 5'-phosphate, yielding 2,5-diamino-6-ribitylamino-4(3H)-pyrimidinone 5'-phosphate. The sequence is that of 2,5-diamino-6-ribosylamino-4(3H)-pyrimidinone 5'-phosphate reductase (RIB7) from Saccharomyces cerevisiae (strain ATCC 204508 / S288c) (Baker's yeast).